The following is a 214-amino-acid chain: Redox-sensing transcriptional repressor Rex (214 aa).

A DNA-binding region (H-T-H motif) is located at residues 17-56; the sequence is LYYRIFKRFHADQVEKASSKQIADAMGIDSATVRRDFSYF. 91-96 contributes to the NAD(+) binding site; sequence GCGNIG.

This sequence belongs to the transcriptional regulatory Rex family. In terms of assembly, homodimer.

The protein localises to the cytoplasm. Its function is as follows. Modulates transcription in response to changes in cellular NADH/NAD(+) redox state. The protein is Redox-sensing transcriptional repressor Rex of Streptococcus pyogenes serotype M12 (strain MGAS9429).